The primary structure comprises 567 residues: 2-succinyl-5-enolpyruvyl-6-hydroxy-3-cyclohexene-1-carboxylate synthase (567 aa).

The protein belongs to the TPP enzyme family. MenD subfamily. As to quaternary structure, homodimer. The cofactor is Mg(2+). Mn(2+) is required as a cofactor. It depends on thiamine diphosphate as a cofactor.

The catalysed reaction is isochorismate + 2-oxoglutarate + H(+) = 5-enolpyruvoyl-6-hydroxy-2-succinyl-cyclohex-3-ene-1-carboxylate + CO2. It participates in quinol/quinone metabolism; 1,4-dihydroxy-2-naphthoate biosynthesis; 1,4-dihydroxy-2-naphthoate from chorismate: step 2/7. Its pathway is quinol/quinone metabolism; menaquinone biosynthesis. Catalyzes the thiamine diphosphate-dependent decarboxylation of 2-oxoglutarate and the subsequent addition of the resulting succinic semialdehyde-thiamine pyrophosphate anion to isochorismate to yield 2-succinyl-5-enolpyruvyl-6-hydroxy-3-cyclohexene-1-carboxylate (SEPHCHC). This Yersinia pseudotuberculosis serotype O:1b (strain IP 31758) protein is 2-succinyl-5-enolpyruvyl-6-hydroxy-3-cyclohexene-1-carboxylate synthase.